Consider the following 445-residue polypeptide: MIEKIINQYQKKLFLIAYSGGIDSTVLLYKMLKIKEKNPQIKIRAIHINHNLHPSSKKWEEHCIKICHKYKIPIITKEIKILLKKNIEETLRIKRYNTIYNYLLNDEILLTGHHLNDQCETLFLSLKRGSGPTGLSGMSIENFLGKKRIVRPFLTKTKKELQKWACENNLESIEDFSNFNIDYDRNFIRHKLIPILEQRWPFFLKNCFRTTVICREETKLKNIFLKEKIQNLINFDESLNIQNFKNINKEVCKALIRYWISLKNIKMPSYKTIECIYNEIICSKKDSNPKIIIDKNEIRRYKTSLYFIKIQKDISNIFLFWHNTDKKLLLPEDLGYLIKNDKGFILPSPKKNELINIRFQLEGKILILGREKRRKIKKIWQEHNIPPWLRNKIPLLFYNNRFISAIGLFVIKEKIINKEKEIQKNWKISWINNVHFNRKNFFLFY.

19–24 (SGGIDS) contributes to the ATP binding site.

This sequence belongs to the tRNA(Ile)-lysidine synthase family.

Its subcellular location is the cytoplasm. It carries out the reaction cytidine(34) in tRNA(Ile2) + L-lysine + ATP = lysidine(34) in tRNA(Ile2) + AMP + diphosphate + H(+). Functionally, ligates lysine onto the cytidine present at position 34 of the AUA codon-specific tRNA(Ile) that contains the anticodon CAU, in an ATP-dependent manner. Cytidine is converted to lysidine, thus changing the amino acid specificity of the tRNA from methionine to isoleucine. The polypeptide is tRNA(Ile)-lysidine synthase (Buchnera aphidicola subsp. Schizaphis graminum (strain Sg)).